A 257-amino-acid polypeptide reads, in one-letter code: UPF0246 protein Shew185_1115 (257 aa).

It belongs to the UPF0246 family.

In Shewanella baltica (strain OS185), this protein is UPF0246 protein Shew185_1115.